The sequence spans 307 residues: Protoheme IX farnesyltransferase (307 aa).

The next 8 helical transmembrane spans lie at M32 to F52, F65 to I85, P108 to L128, P131 to W151, L158 to I178, I186 to A206, L251 to F271, and F287 to F307.

It belongs to the UbiA prenyltransferase family. Protoheme IX farnesyltransferase subfamily. Interacts with CtaA.

It is found in the cell membrane. It carries out the reaction heme b + (2E,6E)-farnesyl diphosphate + H2O = Fe(II)-heme o + diphosphate. The protein operates within porphyrin-containing compound metabolism; heme O biosynthesis; heme O from protoheme: step 1/1. In terms of biological role, converts heme B (protoheme IX) to heme O by substitution of the vinyl group on carbon 2 of heme B porphyrin ring with a hydroxyethyl farnesyl side group. This Bacillus anthracis (strain A0248) protein is Protoheme IX farnesyltransferase.